Here is an 830-residue protein sequence, read N- to C-terminus: Leucine--tRNA ligase (830 aa).

The 'HIGH' region signature appears at proline 42–histidine 52. The short motif at lysine 585–serine 589 is the 'KMSKS' region element. ATP is bound at residue lysine 588.

Belongs to the class-I aminoacyl-tRNA synthetase family.

The protein localises to the cytoplasm. The catalysed reaction is tRNA(Leu) + L-leucine + ATP = L-leucyl-tRNA(Leu) + AMP + diphosphate. The chain is Leucine--tRNA ligase from Halothermothrix orenii (strain H 168 / OCM 544 / DSM 9562).